Here is a 1928-residue protein sequence, read N- to C-terminus: Myosin-1 (1928 aa).

Residues 8 to 71 (SSNMIVWIPD…RISDVFPVNP (64 aa)) form the Myosin N-terminal SH3-like domain. A Myosin motor domain is found at 75-791 (DKVENMSELT…VLADLEKQKD (717 aa)). ATP is bound at residue 180-187 (GESGAGKT). Positions 460 to 529 (IGLLDIAGFE…LQLTIDLIES (70 aa)) are actin-binding. Residues 629–641 (SSSAGVEANISNQ) show a composition bias toward polar residues. The segment at 629–657 (SSSAGVEANISNQEVKKSARTSTFKTTSS) is disordered. Residues 794–823 (LNNIMIKLTATIRGYTVRKEITYHLQKLKK) enclose the IQ domain. Residues 856–1911 (SSNDMTRTKK…FWKSRYESTM (1056 aa)) adopt a coiled-coil conformation.

The protein belongs to the TRAFAC class myosin-kinesin ATPase superfamily. Myosin family.

In terms of biological role, required for cell division. This chain is Myosin-1 (MYO1), found in Saccharomyces cerevisiae (strain ATCC 204508 / S288c) (Baker's yeast).